The following is a 152-amino-acid chain: Transcriptional repressor NrdR (152 aa).

Residues 3 to 34 (CPYCNASETKVIDSRLAAEGAQVRRRRSCNSC) fold into a zinc finger. Positions 49 to 139 (PRIIKSSGKI…VYRDFQDIDA (91 aa)) constitute an ATP-cone domain.

This sequence belongs to the NrdR family. Zn(2+) serves as cofactor.

In terms of biological role, negatively regulates transcription of bacterial ribonucleotide reductase nrd genes and operons by binding to NrdR-boxes. This chain is Transcriptional repressor NrdR, found in Psychrobacter cryohalolentis (strain ATCC BAA-1226 / DSM 17306 / VKM B-2378 / K5).